The sequence spans 202 residues: Nigerythrin (202 aa).

The Ferritin-like diiron domain maps to 23 to 168 (KTAVGSTLEN…AYNDIDAPDD (146 aa)). The Fe cation site is built by E40, E73, E115, E118, E149, H152, C174, C177, C189, and C192. One can recognise a Rubredoxin-like domain in the interval 169–202 (DKFHLCPICGYIHKGEDFEKCPICFRPKDTFTAY).

In terms of assembly, homodimer. May possess two rubredoxin-like centers and two hemerythrin-like binuclear-iron centers per dimer.

The protein localises to the cytoplasm. Functionally, exhibits NADH peroxidase activity (in vitro). In Nitratidesulfovibrio vulgaris (strain ATCC 29579 / DSM 644 / CCUG 34227 / NCIMB 8303 / VKM B-1760 / Hildenborough) (Desulfovibrio vulgaris), this protein is Nigerythrin (ngr).